Reading from the N-terminus, the 292-residue chain is Acetylglutamate kinase (292 aa).

Substrate contacts are provided by residues 62-63 (GG), Arg84, and Asn188.

The protein belongs to the acetylglutamate kinase family. ArgB subfamily.

The protein resides in the cytoplasm. The catalysed reaction is N-acetyl-L-glutamate + ATP = N-acetyl-L-glutamyl 5-phosphate + ADP. Its pathway is amino-acid biosynthesis; L-arginine biosynthesis; N(2)-acetyl-L-ornithine from L-glutamate: step 2/4. In terms of biological role, catalyzes the ATP-dependent phosphorylation of N-acetyl-L-glutamate. This Methanosarcina mazei (strain ATCC BAA-159 / DSM 3647 / Goe1 / Go1 / JCM 11833 / OCM 88) (Methanosarcina frisia) protein is Acetylglutamate kinase.